The sequence spans 97 residues: Small, acid-soluble spore protein gamma-type (97 aa).

The span at 1–42 (MAKQTNKTASGTSTQHVKQQNAQASKNNFGTEFGSETNVQEV) shows a compositional bias: polar residues. The segment at 1–97 (MAKQTNKTAS…KNQNSGKYQG (97 aa)) is disordered. 2 consecutive repeats follow at residues 23-56 (QASK…KSQN) and 58-91 (QASK…KNQN). Residues 43 to 63 (KQQNAQAAANKSQNAQASKNN) show a composition bias toward low complexity. Polar residues predominate over residues 69-78 (ASETSAQEVR). Over residues 79-91 (QQNAQAQAKKNQN) the composition is skewed to low complexity.

The protein belongs to the gamma-type SASP family.

SASP are proteins degraded in the first minutes of spore germination and provide amino acids for both new protein synthesis and metabolism. These proteins may be involved in dormant spore's high resistance to UV light. The polypeptide is Small, acid-soluble spore protein gamma-type (sasP-B) (Priestia megaterium (Bacillus megaterium)).